The following is a 109-amino-acid chain: MSATLKDYLNKRVVIIKVDGECLIASLNGFDKNTNLFITNVFNRISKEFICKAQLLRGSEIALVGLIDAENDDSLAPIDEKKVPMLKDTKNKIENEHVIWEKVYESKTK.

One can recognise a Sm domain in the interval 1–70 (MSATLKDYLN…IALVGLIDAE (70 aa)).

It belongs to the snRNP Sm proteins family. In terms of assembly, component of the heptameric LSM2-LSM8 complex that forms a seven-membered ring structure with a donut shape; an RNA strand can pass through the hole in the center of the ring structure. The LSm subunits are arranged in the order LSM8, LSM2, LSM3, LSM6, LSM5, LSM7 and LSM4. Component of the spliceosome U4/U6-U5 tri-snRNP complex composed of the U4, U6 and U5 snRNAs and at least PRP3, PRP4, PRP6, PRP8, PRP18, PRP31, PRP38, SNU13, SNU23, SNU66, SNU114, SPP381, SMB1, SMD1, SMD2, SMD3, SMX2, SMX3, LSM2, LSM3, LSM4, LSM5, LSM6, LSM7, LSM8, BRR2 and DIB1.

It is found in the nucleus. The protein localises to the cytoplasm. In terms of biological role, component of the nuclear LSM2-LSM8 complex, which is involved in spliceosome assembly. The LSM2-LSM8 complex plays a role in the biogenesis of the spliceosomal U4/U6-U5 tri-snRNP complex by accelerating PRP24-mediated annealing of U4/U6 di-snRNA. The LSM2-LSM8 complex binds U6 snRNA terminating with a non-cyclic 3' phosphate group. LSM2-LSM8 is probably also involved in degradation of nuclear pre-mRNA by targeting them for decapping. LSM2-LSM8 could be involved in processing of pre-tRNAs, pre-rRNAs and U3 snoRNA, although involvement may be indirect. This chain is LSM2-LSM8 complex subunit LSM8 (LSM8), found in Saccharomyces cerevisiae (strain ATCC 204508 / S288c) (Baker's yeast).